Reading from the N-terminus, the 371-residue chain is Bifunctional enzyme IspD/IspF (371 aa).

The tract at residues 1-210 (MLDISLIMLS…LNLPKPSWDI (210 aa)) is 2-C-methyl-D-erythritol 4-phosphate cytidylyltransferase. A 2-C-methyl-D-erythritol 2,4-cyclodiphosphate synthase region spans residues 211 to 371 (FNGNGFDVHE…NLKYFDWMKL (161 aa)). Residues Asp217 and His219 each contribute to the a divalent metal cation site. 4-CDP-2-C-methyl-D-erythritol 2-phosphate is bound by residues 217-219 (DVH) and 243-244 (HS). His251 lines the a divalent metal cation pocket. 4-CDP-2-C-methyl-D-erythritol 2-phosphate contacts are provided by residues 265 to 267 (DIG), 270 to 274 (FPDND), 341 to 344 (TTTE), Phe348, and Arg351.

It in the N-terminal section; belongs to the IspD/TarI cytidylyltransferase family. IspD subfamily. This sequence in the C-terminal section; belongs to the IspF family. It depends on a divalent metal cation as a cofactor.

The enzyme catalyses 2-C-methyl-D-erythritol 4-phosphate + CTP + H(+) = 4-CDP-2-C-methyl-D-erythritol + diphosphate. It carries out the reaction 4-CDP-2-C-methyl-D-erythritol 2-phosphate = 2-C-methyl-D-erythritol 2,4-cyclic diphosphate + CMP. It participates in isoprenoid biosynthesis; isopentenyl diphosphate biosynthesis via DXP pathway; isopentenyl diphosphate from 1-deoxy-D-xylulose 5-phosphate: step 2/6. Its pathway is isoprenoid biosynthesis; isopentenyl diphosphate biosynthesis via DXP pathway; isopentenyl diphosphate from 1-deoxy-D-xylulose 5-phosphate: step 4/6. Its function is as follows. Bifunctional enzyme that catalyzes the formation of 4-diphosphocytidyl-2-C-methyl-D-erythritol from CTP and 2-C-methyl-D-erythritol 4-phosphate (MEP) (IspD), and catalyzes the conversion of 4-diphosphocytidyl-2-C-methyl-D-erythritol 2-phosphate (CDP-ME2P) to 2-C-methyl-D-erythritol 2,4-cyclodiphosphate (ME-CPP) with a corresponding release of cytidine 5-monophosphate (CMP) (IspF). The polypeptide is Bifunctional enzyme IspD/IspF (Campylobacter lari (strain RM2100 / D67 / ATCC BAA-1060)).